Reading from the N-terminus, the 403-residue chain is 26S proteasome regulatory subunit 8 homolog (403 aa).

186 to 193 is an ATP binding site; the sequence is GPPGTGKT.

It belongs to the AAA ATPase family.

It localises to the cytoplasm. The protein resides in the nucleus. The 26S proteasome is involved in the ATP-dependent degradation of ubiquitinated proteins. The regulatory (or ATPase) complex confers ATP dependency and substrate specificity to the 26S complex. This chain is 26S proteasome regulatory subunit 8 homolog (let1), found in Schizosaccharomyces pombe (strain 972 / ATCC 24843) (Fission yeast).